The sequence spans 389 residues: MTILLSETAILPTPLGGTLVNALHRPGHDFDPAELRDLPRLALSERSAADLEMLGTGAYSPLRGFVGEADYLSIIERMRLADGTPWSIPITLPVTREQASELSGRVVLTHGGQDVGWIDVQEKFEARKSFEAREVYRTEDPAHPGVAALLAQGDVNLSGPVALFDVPRGAFPRHHRTPAEVRAVIEARGWRSTVAFQTRNPIHRAHEYLQKVALELVDGLLLHPLVGATKGDDVPADTRVKAYEVLLDNYYPQERTLLSVYPAAMRYAGPREAILHALSRRNYGVTHFIVGRDHAGVGSYYGTYDAQEIFSAYAPQELGIQILKFEHTFYCQSCGQLVSPRTCPHDSSHHLVLSGTKVREKLRAGETLPAEFTRPEVAEVLREAYAAQG.

The protein belongs to the sulfate adenylyltransferase family.

It catalyses the reaction sulfate + ATP + H(+) = adenosine 5'-phosphosulfate + diphosphate. It functions in the pathway sulfur metabolism; hydrogen sulfide biosynthesis; sulfite from sulfate: step 1/3. The polypeptide is Sulfate adenylyltransferase (Deinococcus deserti (strain DSM 17065 / CIP 109153 / LMG 22923 / VCD115)).